The chain runs to 363 residues: NAD(P)H-quinone oxidoreductase subunit 1, chloroplastic (363 aa).

The next 8 membrane-spanning stretches (helical) occupy residues 30-50, 98-118, 127-147, 165-185, 203-223, 248-268, 300-320, and 336-356; these read LVPIVTLVLGITIGVLVIVWL, FSIGPSIAVISIFLSYSVIPF, LSIGVFFWIAISSIAPVGLLM, AAQSISYEIPLALCVLSISLL, FWGWNLWRQPIGFIVFLISSL, YSGIKFGLFYIASYLNLLVSS, VFGTLIGIFITLAKTYLFLFI, and LLNLGWKFLLPISLGNLLLTT.

Belongs to the complex I subunit 1 family. In terms of assembly, NDH is composed of at least 16 different subunits, 5 of which are encoded in the nucleus.

The protein resides in the plastid. Its subcellular location is the chloroplast thylakoid membrane. The catalysed reaction is a plastoquinone + NADH + (n+1) H(+)(in) = a plastoquinol + NAD(+) + n H(+)(out). It catalyses the reaction a plastoquinone + NADPH + (n+1) H(+)(in) = a plastoquinol + NADP(+) + n H(+)(out). NDH shuttles electrons from NAD(P)H:plastoquinone, via FMN and iron-sulfur (Fe-S) centers, to quinones in the photosynthetic chain and possibly in a chloroplast respiratory chain. The immediate electron acceptor for the enzyme in this species is believed to be plastoquinone. Couples the redox reaction to proton translocation, and thus conserves the redox energy in a proton gradient. The polypeptide is NAD(P)H-quinone oxidoreductase subunit 1, chloroplastic (Solanum bulbocastanum (Wild potato)).